The following is a 305-amino-acid chain: Dermonecrotic toxin LiSicTox-alphaIA2aiii (305 aa).

A signal peptide spans 1–17 (LPYIALILVCWSVLSQA). A propeptide spanning residues 18-25 (AQTDVEER) is cleaved from the precursor. Histidine 37 is a catalytic residue. Mg(2+) contacts are provided by glutamate 57 and aspartate 59. The active-site Nucleophile is histidine 73. Cystine bridges form between cysteine 77/cysteine 83 and cysteine 79/cysteine 222. Aspartate 117 is a binding site for Mg(2+). N-linked (GlcNAc...) asparagine glycosylation is present at asparagine 282.

It belongs to the arthropod phospholipase D family. Class II subfamily. Requires Mg(2+) as cofactor. As to expression, expressed by the venom gland.

Its subcellular location is the secreted. It carries out the reaction an N-(acyl)-sphingosylphosphocholine = an N-(acyl)-sphingosyl-1,3-cyclic phosphate + choline. The catalysed reaction is an N-(acyl)-sphingosylphosphoethanolamine = an N-(acyl)-sphingosyl-1,3-cyclic phosphate + ethanolamine. The enzyme catalyses a 1-acyl-sn-glycero-3-phosphocholine = a 1-acyl-sn-glycero-2,3-cyclic phosphate + choline. It catalyses the reaction a 1-acyl-sn-glycero-3-phosphoethanolamine = a 1-acyl-sn-glycero-2,3-cyclic phosphate + ethanolamine. Its function is as follows. Dermonecrotic toxins cleave the phosphodiester linkage between the phosphate and headgroup of certain phospholipids (sphingolipid and lysolipid substrates), forming an alcohol (often choline) and a cyclic phosphate. This toxin acts on sphingomyelin (SM). It may also act on ceramide phosphoethanolamine (CPE), lysophosphatidylcholine (LPC) and lysophosphatidylethanolamine (LPE), but not on lysophosphatidylserine (LPS), and lysophosphatidylglycerol (LPG). It acts by transphosphatidylation, releasing exclusively cyclic phosphate products as second products. Induces dermonecrosis, hemolysis, increased vascular permeability, edema, inflammatory response, and platelet aggregation. This is Dermonecrotic toxin LiSicTox-alphaIA2aiii from Loxosceles intermedia (Brown spider).